Consider the following 255-residue polypeptide: Putative ankyrin repeat protein R880 (255 aa).

ANK repeat units lie at residues 79–109 (SGIN…DIHY), 110–139 (KTDY…NINT), 141–169 (DCYA…NVRK), 171–199 (RDLA…DVRS), and 201–229 (KNYA…NFRV).

The protein is Putative ankyrin repeat protein R880 of Acanthamoeba polyphaga (Amoeba).